Here is a 386-residue protein sequence, read N- to C-terminus: L-arabinitol 4-dehydrogenase (386 aa).

Zn(2+) is bound by residues Cys55, His80, Glu81, Cys110, Cys113, Cys116, Cys124, and Glu165. NAD(+)-binding positions include 192–193 (PI), Asp213, Arg218, Ile293, and 317–319 (QYR).

Belongs to the zinc-containing alcohol dehydrogenase family. As to quaternary structure, homotetramer. It depends on Zn(2+) as a cofactor.

The catalysed reaction is L-arabinitol + NAD(+) = L-xylulose + NADH + H(+). The protein operates within carbohydrate degradation; L-arabinose degradation via L-arabinitol; D-xylulose 5-phosphate from L-arabinose (fungal route): step 2/5. Functionally, catalyzes the NAD-dependent oxidation of L-arabinitol to L-xylulose in the fungal L-arabinose catabolic pathway. L-arabinose catabolism is important for using plant material as a carbon source. Not active with NADP as cosubstrate. The sequence is that of L-arabinitol 4-dehydrogenase (ladA) from Aspergillus niger (strain ATCC MYA-4892 / CBS 513.88 / FGSC A1513).